A 266-amino-acid polypeptide reads, in one-letter code: Luciferase (266 aa).

A helical membrane pass occupies residues 22–41; the sequence is GLATACCAVAVASAIAFPYI.

Belongs to the fungal luciferase family.

The protein resides in the membrane. It catalyses the reaction 3-hydroxyhispidin + O2 = (E)-caffeoylpyruvate + hnu + CO2. The catalysed reaction is 3-hydroxyhispidin + O2 = 4-[(E)-2-(3,4-dihydroxyphenyl)ethenyl]-1,7-dihydroxy-2,3,5-trioxabicyclo[2.2.2]oct-7-en-6-one. Functionally, luciferase; part of the gene cluster that mediates the fungal bioluminescence cycle. Uses the fungal luciferin 3-hydroxyhispidin as a substrate to produce an endoperoxide as a high-energy intermediate with decomposition that yields oxyluciferin (also known as caffeoylpyruvate) and light emission. The fungal bioluminescence cycle begins with the hispidin synthetase that catalyzes the formation of hispidin which is further hydroxylated by the hispidin-3-hydroxylase, yielding the fungal luciferin 3-hydroxyhispidin. The luciferase then produces an endoperoxide as a high-energy intermediate with decomposition that yields oxyluciferin and light emission. Oxyluciferin can be recycled to caffeic acid by caffeoylpyruvate hydrolase. This is Luciferase from Armillaria ostoyae (Armillaria root rot fungus).